Consider the following 309-residue polypeptide: GalNAc(5)-diNAcBac-PP-undecaprenol beta-1,3-glucosyltransferase (309 aa).

The helical transmembrane segment at 273–291 threads the bilayer; the sequence is SLSIKINAPALILLILSII.

Belongs to the glycosyltransferase 2 family.

The protein localises to the membrane. It carries out the reaction [alpha-D-GalNAc-(1-&gt;4)]4-alpha-D-GalNAc-(1-&gt;3)-alpha-D-diNAcBac-tri-trans,hepta-cis-undecaprenyl diphosphate + UDP-alpha-D-glucose = [alpha-D-GalNAc-(1-&gt;4)]2-[beta-D-Glc-(1-&gt;3)]-[alpha-D-GalNAc-(1-&gt;4)]2-alpha-D-GalNAc-(1-&gt;3)-alpha-D-diNAcBac-tri-trans,hepta-cis-undecaprenyl diphosphate + UDP + H(+). Its pathway is protein modification; protein glycosylation. Glucosyltransferase that adds he final branching glucose to complete the final heptasaccharide structure in the N-linked protein glycosylation pathway. This Campylobacter jejuni subsp. jejuni serotype O:2 (strain ATCC 700819 / NCTC 11168) protein is GalNAc(5)-diNAcBac-PP-undecaprenol beta-1,3-glucosyltransferase (pglI).